Here is a 325-residue protein sequence, read N- to C-terminus: GMP reductase (325 aa).

The Thioimidate intermediate role is filled by C174. 203–226 (MIADGGIRTHGDIAKSIRFGASMV) serves as a coordination point for NADP(+).

This sequence belongs to the IMPDH/GMPR family. GuaC type 2 subfamily.

It carries out the reaction IMP + NH4(+) + NADP(+) = GMP + NADPH + 2 H(+). Functionally, catalyzes the irreversible NADPH-dependent deamination of GMP to IMP. It functions in the conversion of nucleobase, nucleoside and nucleotide derivatives of G to A nucleotides, and in maintaining the intracellular balance of A and G nucleotides. The protein is GMP reductase of Staphylococcus carnosus (strain TM300).